The following is a 617-amino-acid chain: Chaperone protein HscA homolog (617 aa).

Residues 1–23 (MALLQIAEPGQSSAPHEHKRAAG) are disordered.

Belongs to the heat shock protein 70 family.

Its function is as follows. Chaperone involved in the maturation of iron-sulfur cluster-containing proteins. Has a low intrinsic ATPase activity which is markedly stimulated by HscB. In Vibrio vulnificus (strain YJ016), this protein is Chaperone protein HscA homolog.